We begin with the raw amino-acid sequence, 342 residues long: S-adenosylmethionine:tRNA ribosyltransferase-isomerase (342 aa).

This sequence belongs to the QueA family. As to quaternary structure, monomer.

It localises to the cytoplasm. The enzyme catalyses 7-aminomethyl-7-carbaguanosine(34) in tRNA + S-adenosyl-L-methionine = epoxyqueuosine(34) in tRNA + adenine + L-methionine + 2 H(+). The protein operates within tRNA modification; tRNA-queuosine biosynthesis. Functionally, transfers and isomerizes the ribose moiety from AdoMet to the 7-aminomethyl group of 7-deazaguanine (preQ1-tRNA) to give epoxyqueuosine (oQ-tRNA). This chain is S-adenosylmethionine:tRNA ribosyltransferase-isomerase, found in Streptococcus agalactiae serotype V (strain ATCC BAA-611 / 2603 V/R).